The sequence spans 145 residues: D-aminoacyl-tRNA deacylase (145 aa).

The short motif at Gly137–Pro138 is the Gly-cisPro motif, important for rejection of L-amino acids element.

The protein belongs to the DTD family. Homodimer.

The protein resides in the cytoplasm. It carries out the reaction glycyl-tRNA(Ala) + H2O = tRNA(Ala) + glycine + H(+). The enzyme catalyses a D-aminoacyl-tRNA + H2O = a tRNA + a D-alpha-amino acid + H(+). An aminoacyl-tRNA editing enzyme that deacylates mischarged D-aminoacyl-tRNAs. Also deacylates mischarged glycyl-tRNA(Ala), protecting cells against glycine mischarging by AlaRS. Acts via tRNA-based rather than protein-based catalysis; rejects L-amino acids rather than detecting D-amino acids in the active site. By recycling D-aminoacyl-tRNA to D-amino acids and free tRNA molecules, this enzyme counteracts the toxicity associated with the formation of D-aminoacyl-tRNA entities in vivo and helps enforce protein L-homochirality. This is D-aminoacyl-tRNA deacylase from Erwinia tasmaniensis (strain DSM 17950 / CFBP 7177 / CIP 109463 / NCPPB 4357 / Et1/99).